Reading from the N-terminus, the 307-residue chain is Pollen allergen KBG 60 (307 aa).

An N-terminal signal peptide occupies residues 1–22 (MAVQKYTVALFLVALVVGPAAS).

It belongs to the Poa p IX/Phl p VI allergen family. As to expression, pollen.

This Poa pratensis (Kentucky bluegrass) protein is Pollen allergen KBG 60.